A 181-amino-acid chain; its full sequence is HGPRTase-like protein 2 (181 aa).

It belongs to the purine/pyrimidine phosphoribosyltransferase family. Archaeal HPRT subfamily.

May catalyze a purine salvage reaction, the substrate is unknown. This Haloquadratum walsbyi (strain DSM 16854 / JCM 12705 / C23) protein is HGPRTase-like protein 2.